A 102-amino-acid polypeptide reads, in one-letter code: RNA-binding protein Hfq (102 aa).

In terms of domain architecture, Sm spans 9-68; it reads DPFLNALRRERVPVSIYLVNGIKLQGQIESFDQFVILLKNTVSQMVYKHAISTVVPSRPV. The disordered stretch occupies residues 63-102; that stretch reads VPSRPVSHHSNNAGGGTSSNYHHGSSAQNTSAQQDSEETE. Residues 70–96 are compositionally biased toward polar residues; sequence HHSNNAGGGTSSNYHHGSSAQNTSAQQ.

It belongs to the Hfq family. Homohexamer.

RNA chaperone that binds small regulatory RNA (sRNAs) and mRNAs to facilitate mRNA translational regulation in response to envelope stress, environmental stress and changes in metabolite concentrations. Also binds with high specificity to tRNAs. This is RNA-binding protein Hfq from Escherichia fergusonii (strain ATCC 35469 / DSM 13698 / CCUG 18766 / IAM 14443 / JCM 21226 / LMG 7866 / NBRC 102419 / NCTC 12128 / CDC 0568-73).